Consider the following 367-residue polypeptide: Methylthioribose-1-phosphate isomerase (367 aa).

The active-site Proton donor is Asp-250.

Belongs to the eIF-2B alpha/beta/delta subunits family. MtnA subfamily.

It localises to the cytoplasm. The protein resides in the nucleus. The catalysed reaction is 5-(methylsulfanyl)-alpha-D-ribose 1-phosphate = 5-(methylsulfanyl)-D-ribulose 1-phosphate. It functions in the pathway amino-acid biosynthesis; L-methionine biosynthesis via salvage pathway; L-methionine from S-methyl-5-thio-alpha-D-ribose 1-phosphate: step 1/6. In terms of biological role, catalyzes the interconversion of methylthioribose-1-phosphate (MTR-1-P) into methylthioribulose-1-phosphate (MTRu-1-P). This chain is Methylthioribose-1-phosphate isomerase (IDI2), found in Zea mays (Maize).